The primary structure comprises 302 residues: Protoheme IX farnesyltransferase (302 aa).

9 consecutive transmembrane segments (helical) span residues 28-48, 50-70, 93-115, 119-138, 147-167, 172-192, 219-239, 242-262, and 271-291; these read LALL…SLDP, MLAL…AFNM, LNPY…SAAA, YVAL…YTQL, IIFG…AAAG, GGVL…WFLG, LIAV…LYYG, FLTA…IGGF, and ALKL…ILPL.

This sequence belongs to the UbiA prenyltransferase family. Protoheme IX farnesyltransferase subfamily.

It is found in the cell membrane. It catalyses the reaction heme b + (2E,6E)-farnesyl diphosphate + H2O = Fe(II)-heme o + diphosphate. It functions in the pathway porphyrin-containing compound metabolism; heme O biosynthesis; heme O from protoheme: step 1/1. Converts heme B (protoheme IX) to heme O by substitution of the vinyl group on carbon 2 of heme B porphyrin ring with a hydroxyethyl farnesyl side group. The sequence is that of Protoheme IX farnesyltransferase from Aeropyrum pernix (strain ATCC 700893 / DSM 11879 / JCM 9820 / NBRC 100138 / K1).